The following is a 107-amino-acid chain: MKQFRIRKDDKVVVIAGKDKGKIGKVLKVLPKKDGVLVEKVNMVKRHMRANPYRQQPGGIIEKEMPLDISNVMVMCDACAKATKVGYRYTEDGKKVRFCKKCNEIIG.

This sequence belongs to the universal ribosomal protein uL24 family. As to quaternary structure, part of the 50S ribosomal subunit.

One of two assembly initiator proteins, it binds directly to the 5'-end of the 23S rRNA, where it nucleates assembly of the 50S subunit. Its function is as follows. One of the proteins that surrounds the polypeptide exit tunnel on the outside of the subunit. This Nitratidesulfovibrio vulgaris (strain DSM 19637 / Miyazaki F) (Desulfovibrio vulgaris) protein is Large ribosomal subunit protein uL24.